Here is a 439-residue protein sequence, read N- to C-terminus: Xylose isomerase (439 aa).

Residues histidine 101 and aspartate 104 contribute to the active site. Glutamate 232, glutamate 268, histidine 271, aspartate 296, aspartate 307, aspartate 309, and aspartate 339 together coordinate Mg(2+).

This sequence belongs to the xylose isomerase family. Homotetramer. Mg(2+) is required as a cofactor.

It localises to the cytoplasm. The catalysed reaction is alpha-D-xylose = alpha-D-xylulofuranose. This chain is Xylose isomerase, found in Photorhabdus laumondii subsp. laumondii (strain DSM 15139 / CIP 105565 / TT01) (Photorhabdus luminescens subsp. laumondii).